A 143-amino-acid polypeptide reads, in one-letter code: Actinoxanthin (143 aa).

A signal peptide spans Met1–Ala33. Cystine bridges form between Cys69–Cys78 and Cys119–Cys124.

The protein belongs to the neocarzinostatin family.

In terms of biological role, binds non-covalently to a chromophore which is the cytotoxic and mutagenic component of the antibiotic. The chromophore binds to DNA as a weak intercalator and causes single- and double-strand breaks. The sequence is that of Actinoxanthin (axnA) from Streptomyces globisporus.